The chain runs to 732 residues: Zinc/cadmium/lead-transporting P-type ATPase (732 aa).

Over 1-124 (MSTPDNHGKK…QAAEEPQASR (124 aa)) the chain is Cytoplasmic. In terms of domain architecture, HMA spans 48–112 (TRYSWKVSGM…ALQKAGYSLR (65 aa)). Positions 58, 59, and 62 each coordinate Zn(2+). The helical transmembrane segment at 125 to 145 (LKENLPLITLIVMMAISWGLE) threads the bilayer. Residue glutamine 146 is a topological domain, periplasmic. The chain crosses the membrane as a helical span at residues 147 to 167 (FNHPFGQLAFIATTLVGLYPI). Topologically, residues 168 to 179 (ARQALRLIKSGS) are cytoplasmic. A helical membrane pass occupies residues 180–197 (YFAIETLMSVAAIGALFI). Residues 198 to 202 (GATAE) are Periplasmic-facing. Residues 203–222 (AAMVLLLFLIGERLEGWAAS) form a helical membrane-spanning segment. At 223-356 (RARQGVSALM…IDRFSRIYTP (134 aa)) the chain is on the cytoplasmic side. A helical membrane pass occupies residues 357–377 (AIMAVALLVTLVPPLLFAASW). Topologically, residues 378 to 383 (QEWIYK) are periplasmic. The helical transmembrane segment at 384-404 (GLTLLLIGCPCALVISTPAAI) threads the bilayer. The Zn(2+) site is built by cysteine 392 and cysteine 394. The Cytoplasmic segment spans residues 405-685 (TSGLAAAARR…RATHANIRQN (281 aa)). Aspartate 436 serves as the catalytic 4-aspartylphosphate intermediate. Residues aspartate 436, threonine 438, and aspartate 628 each coordinate Mg(2+). A helical membrane pass occupies residues 686–702 (ITIALGLKGIFLVTTLL). The Periplasmic segment spans residues 703 to 707 (GMTGL). A helical membrane pass occupies residues 708 to 729 (WLAVLADTGATVLVTANALRLL). Residue aspartate 714 coordinates Zn(2+). The Cytoplasmic segment spans residues 730 to 732 (RRR).

Belongs to the cation transport ATPase (P-type) (TC 3.A.3) family. Type IB subfamily.

Its subcellular location is the cell inner membrane. The catalysed reaction is Pb(2+)(in) + ATP + H2O = Pb(2+)(out) + ADP + phosphate + H(+). It catalyses the reaction Zn(2+)(in) + ATP + H2O = Zn(2+)(out) + ADP + phosphate + H(+). The enzyme catalyses Cd(2+)(in) + ATP + H2O = Cd(2+)(out) + ADP + phosphate + H(+). Inhibited by orthovanadate. In terms of biological role, confers resistance to zinc, cadmium and lead. Couples the hydrolysis of ATP with the export of zinc, cadmium or lead, with highest activity when the metals are present as metal-thiolate complexes. Can also bind nickel, copper, cobalt and mercury. The polypeptide is Zinc/cadmium/lead-transporting P-type ATPase (Escherichia coli (strain K12)).